The following is a 196-amino-acid chain: Small ribosomal subunit protein uS4c (196 aa).

An S4 RNA-binding domain is found at 89–149 (MRLDNILFRL…DKQRSKALIQ (61 aa)).

This sequence belongs to the universal ribosomal protein uS4 family. As to quaternary structure, part of the 30S ribosomal subunit. Contacts protein S5. The interaction surface between S4 and S5 is involved in control of translational fidelity.

Its subcellular location is the plastid. The protein resides in the chloroplast. Functionally, one of the primary rRNA binding proteins, it binds directly to 16S rRNA where it nucleates assembly of the body of the 30S subunit. Its function is as follows. With S5 and S12 plays an important role in translational accuracy. The polypeptide is Small ribosomal subunit protein uS4c (rps4) (Asparagus maritimus (Sea asparagus)).